Reading from the N-terminus, the 349-residue chain is Biotin synthase (349 aa).

A compositionally biased stretch (basic and acidic residues) spans 1-11 (MLEGIEREAAE). The tract at residues 1–30 (MLEGIEREAAEHSNGCSGPAGHAPPAGAPR) is disordered. A Radical SAM core domain is found at 64-283 (HEVQLCTLLS…IAVARVMMPR (220 aa)). [4Fe-4S] cluster-binding residues include Cys79, Cys83, and Cys86. Residues Cys123, Cys155, Cys215, and Arg287 each contribute to the [2Fe-2S] cluster site.

This sequence belongs to the radical SAM superfamily. Biotin synthase family. As to quaternary structure, homodimer. It depends on [4Fe-4S] cluster as a cofactor. [2Fe-2S] cluster is required as a cofactor.

The enzyme catalyses (4R,5S)-dethiobiotin + (sulfur carrier)-SH + 2 reduced [2Fe-2S]-[ferredoxin] + 2 S-adenosyl-L-methionine = (sulfur carrier)-H + biotin + 2 5'-deoxyadenosine + 2 L-methionine + 2 oxidized [2Fe-2S]-[ferredoxin]. It participates in cofactor biosynthesis; biotin biosynthesis; biotin from 7,8-diaminononanoate: step 2/2. In terms of biological role, catalyzes the conversion of dethiobiotin (DTB) to biotin by the insertion of a sulfur atom into dethiobiotin via a radical-based mechanism. This is Biotin synthase from Sorangium cellulosum (strain So ce56) (Polyangium cellulosum (strain So ce56)).